The chain runs to 320 residues: MNNHKKLGILLANLGTPQAPTSQAVKAFLSQFLHDQRVVDMSRWLWCPLLHGIILPTRSPKVAKLYQSIWMDEGSPLMVYSRRQRDKLAELSQRPVELGMTYGEPSLLEGVRKLQQQGVEQIVVLPLYPQYSATTTAAVFDGLAKALRQLPVVPELHFIRDYHDHPLYIQALAKSVRASWQQHGQGDLLLCSYHGIPKRYAQNGDIYPEHCLKTTELLAQALGLPQDKVMMTYQSQFGKEEWLQPYTDKTMEALPRQGIKKLDVICPAFSVDCLETLEEIAEQNQEIFLHSGGEAFHYVPCLNDSQSHIELMAALVKVDC.

Fe cation contacts are provided by His194 and Glu275.

The protein belongs to the ferrochelatase family.

It is found in the cytoplasm. It carries out the reaction heme b + 2 H(+) = protoporphyrin IX + Fe(2+). It functions in the pathway porphyrin-containing compound metabolism; protoheme biosynthesis; protoheme from protoporphyrin-IX: step 1/1. In terms of biological role, catalyzes the ferrous insertion into protoporphyrin IX. The chain is Ferrochelatase from Vibrio cholerae serotype O1 (strain ATCC 39315 / El Tor Inaba N16961).